The sequence spans 131 residues: Single-stranded DNA-binding protein 1 (131 aa).

Residues 1–103 enclose the SSB domain; the sequence is MYNKVIAIGR…VLCQSFQLLE (103 aa).

Homotetramer.

The sequence is that of Single-stranded DNA-binding protein 1 (ssb1) from Streptococcus pyogenes serotype M6 (strain ATCC BAA-946 / MGAS10394).